Here is a 288-residue protein sequence, read N- to C-terminus: Undecaprenyl-diphosphatase (288 aa).

8 consecutive transmembrane segments (helical) span residues Gly25–Leu45, Phe53–Tyr73, Trp93–Leu113, Leu121–Ile141, Val171–Val191, Ser196–Leu216, Gly231–Ile251, and Phe263–Val283.

Belongs to the UppP family.

It localises to the cell membrane. The catalysed reaction is di-trans,octa-cis-undecaprenyl diphosphate + H2O = di-trans,octa-cis-undecaprenyl phosphate + phosphate + H(+). In terms of biological role, catalyzes the dephosphorylation of undecaprenyl diphosphate (UPP). Confers resistance to bacitracin. The chain is Undecaprenyl-diphosphatase from Streptococcus thermophilus (strain CNRZ 1066).